Consider the following 89-residue polypeptide: Aminoacyl carrier protein 2 (89 aa).

Positions 6–84 (INVQNRVLSV…AMERMILNQL (79 aa)) constitute a Carrier domain. Residue S42 is modified to O-(pantetheine 4'-phosphoryl)serine.

Post-translationally, 4'-phosphopantetheine is transferred from CoA to a specific serine of the apo-form of this carrier protein.

Aminoacyl carrier protein. Can be charged with L-glycine via the formation of a thioester bond between the amino acid and the 4'-phosphopantetheinyl prosthetic group, catalyzed by the bll6282 ligase. The chain is Aminoacyl carrier protein 2 from Bradyrhizobium diazoefficiens (strain JCM 10833 / BCRC 13528 / IAM 13628 / NBRC 14792 / USDA 110).